We begin with the raw amino-acid sequence, 240 residues long: Insulin-like growth factor-binding protein 3 receptor (240 aa).

Residues 1 to 38 (MGSCQAGHNLHLCLAHHPPLVCATLILLLLGLSGLGLG) form the signal peptide. The Extracellular portion of the chain corresponds to 39–204 (GFLLTHTTGL…SEELALCGSR (166 aa)). A glycan (N-linked (GlcNAc...) asparagine) is linked at Asn-167. The chain crosses the membrane as a helical span at residues 205-225 (VLGLGFFLVLLCGLLCCTTAV). Residues 226-240 (CFHPRPEFHWSRTRL) lie on the Cytoplasmic side of the membrane.

As to quaternary structure, interacts with IGFBP3. Interacts with CASP8.

Its subcellular location is the cell membrane. Functionally, cell death receptor specific for IGFBP3, may mediate caspase-8-dependent apoptosis upon ligand binding. In Mus musculus (Mouse), this protein is Insulin-like growth factor-binding protein 3 receptor (Tmem219).